Consider the following 165-residue polypeptide: Sulfopyruvate decarboxylase subunit alpha (165 aa).

It belongs to the ComD family. As to quaternary structure, heterododecamer composed of 6 subunits alpha and 6 subunits beta.

It carries out the reaction 3-sulfopyruvate + H(+) = sulfoacetaldehyde + CO2. It functions in the pathway cofactor biosynthesis; coenzyme M biosynthesis; sulfoacetaldehyde from phosphoenolpyruvate and sulfite: step 4/4. In terms of biological role, involved in the biosynthesis of the coenzyme M (2-mercaptoethanesulfonic acid). Catalyzes the decarboxylation of sulfopyruvate to sulfoacetaldehyde. This chain is Sulfopyruvate decarboxylase subunit alpha, found in Methanothermobacter thermautotrophicus (strain ATCC 29096 / DSM 1053 / JCM 10044 / NBRC 100330 / Delta H) (Methanobacterium thermoautotrophicum).